A 1098-amino-acid polypeptide reads, in one-letter code: MSHIQSIFAQIRDPFRKLSFYSLPLSSETSSVDSNGLKNSLKDAYFGLEKALTNTDADLPLNLCDYIFFPIVPVLKSWYRVPSTGVEYAIQCVNLLYKHGWREAHNEMLTMQLLLMLLNIADGWKSPSETVEQDFRVREITFETLENVITDFKPNFHDKRQYLLFARALSSALDIIPNKNSSRRLQFASLCCVQKLICPKQYRLPTEFLTTFLPGIVSGLTKGLAPNGTCQYFKNVCISLNILGDTVVKAISDDNTKDLPDEKDASSNSHFFGPTKRTKSWKRATCQQLSNAVKAILHLRSSQNLHVQDALFDFCFILFRDCLDSLKDCRIHLLESMLKLINKKENPKLRDYGMNKLVSLIESFNNITMESVLTECLNDWSTTWSSVSTFASEDNKLEELNRLKSLLSISSHLPKTLQLMEPLLDGILSQLVPKSSGIDSNSQKLLTSSTSNEYIHGEFFGGNEMERTTQEIVTSFAKAPNVKYVMQSLLSKATSATNENSVRAFWAFMVLLKSDVETVDSLEMYIDSLEQYSFEVLQQLSQLNVFTKASLEDKQKKEKYNLLCVRSCIAIDSISWISSLQGVKFRSKLMAYFYPLLEHLAFASPYVSSFAEACIQAIATNCNYSTPAELLRENIDYVVNSVALKLNTLDVSPQLPIVMAYVIKNDDGGCIRYIGDVVDAIFGILDAYHGYARLTEGLLGILYAIIKQESINGEEKKLIVGVEEDAMNEDKNKPCKKIREFVQLLLENPNYPLPKDDHELEDMIHDEQQETKSGHEQFREHAMKEKEKKGKENENMGETTVDHENINSNVMDEQGEKQKDDVVDMVRKITEKAQLFLSHEQITIRVEMLKLLSYGSNVLAKEPNTFYPAINTFWPLVVIQLDTDNELLVECALETIYQVCALADDFMTSRIRQDLLPRLETLCQRWHLFNVARTYSSEHRLQRAMLKVTSACVANKLSIVVYLKLMGITAPIIRAITHMSQKYAGDESLVEETWNAFSKQNPDAVYYEREVRGSQMIDTFSTELLIPGKQRVQRTYRRTHEVLEPVGAKTSETVFNDLLGQQGSGKTETQEEPLPSLDNLLHLNQPKKGAKKPLISII.

The disordered stretch occupies residues 768-795; it reads QQETKSGHEQFREHAMKEKEKKGKENEN.

Belongs to the tti1 family. Component of the TORC1 complex composed of at least mip1, orb5, tel2, toc1, toc89, tor2, tti1 and wat1. Component of the TORC2 complex composed of at least bit61, orb5, sin1, ste20, tel2, tor1, tti1 and wat1. Interacts with tel2.

It is found in the cytoplasm. Component of the TORC1 and TORC2 complexes required for the regulation of the cellular respons to changes in available nutrients. The polypeptide is TEL2-interacting protein 1 (tti1) (Schizosaccharomyces pombe (strain 972 / ATCC 24843) (Fission yeast)).